We begin with the raw amino-acid sequence, 212 residues long: Redox-sensing transcriptional repressor Rex (212 aa).

Positions 17 to 56 form a DNA-binding region, H-T-H motif; sequence KYHRYLQELMENDVDRISSKELSEKIGFTASQIRQDLNCF. 91-96 contributes to the NAD(+) binding site; that stretch reads GAGNIG.

The protein belongs to the transcriptional regulatory Rex family. Homodimer.

The protein localises to the cytoplasm. Modulates transcription in response to changes in cellular NADH/NAD(+) redox state. The protein is Redox-sensing transcriptional repressor Rex of Clostridium perfringens (strain ATCC 13124 / DSM 756 / JCM 1290 / NCIMB 6125 / NCTC 8237 / Type A).